The sequence spans 166 residues: Small ribosomal subunit protein uS5 (166 aa).

An S5 DRBM domain is found at 11–74 (FLEKLIAVNR…EKARRNMVDV (64 aa)).

It belongs to the universal ribosomal protein uS5 family. In terms of assembly, part of the 30S ribosomal subunit. Contacts proteins S4 and S8.

Its function is as follows. With S4 and S12 plays an important role in translational accuracy. Located at the back of the 30S subunit body where it stabilizes the conformation of the head with respect to the body. This is Small ribosomal subunit protein uS5 from Alteromonas mediterranea (strain DSM 17117 / CIP 110805 / LMG 28347 / Deep ecotype).